The following is a 78-amino-acid chain: Large ribosomal subunit protein bL28 (78 aa).

It belongs to the bacterial ribosomal protein bL28 family.

In Acinetobacter baylyi (strain ATCC 33305 / BD413 / ADP1), this protein is Large ribosomal subunit protein bL28.